We begin with the raw amino-acid sequence, 274 residues long: Protein RecA (274 aa).

An ATP-binding site is contributed by 43–50; sequence GPESSGKT.

It belongs to the RecA family.

Its subcellular location is the cytoplasm. Can catalyze the hydrolysis of ATP in the presence of single-stranded DNA, the ATP-dependent uptake of single-stranded DNA by duplex DNA, and the ATP-dependent hybridization of homologous single-stranded DNAs. It interacts with LexA causing its activation and leading to its autocatalytic cleavage. This Neisseria polysaccharea protein is Protein RecA.